The sequence spans 562 residues: MASAASSLPLLVSSLLLALFALGAHADVKRYQFDIVMSNVSRLCHEKAMVTVNGSYPGPTIYAREGDRVIVNVTNHVKHNMTIHWHGLKQRRNGWADGPAYVTQCPIGSGGSYVYDFNVTRQRGTLWWHAHIAWMRATVHGAIVILPAAGVPYPFPKPDDEAEIVLGEWWHADVETVERQGSMLGMAPNMSDAHTINGKPGPLVPFCSEKHTYALQVQSGKTYLLRIINAAVNDELFFSIAGHNMTVVEIDATYTKPFAASTVQLSPGQTMNVLVSADQSPGRYFMVAKPFNDVPIPADNKTATAILQYAGVPTSVVPALPQTMPATNSTGSVAAFHDKLRSLNSPRYPADVPLAVDRHLLYTIGLNIDPCETCLNRSRLAASLNNITFVMPRTALLQAHYYGQKGVFAADFPDRPPARFNYTGVPLTAGLGTSLGTRLSKIAYNATVELVLQDTNLLSVESHPFHLHGYNFFVVGRGVGNFDPAKDPAKYNLVDPPERNTVGVPAGGWTAIRFRADNPGVWFLHCHLEVHTSWGLKMAFLVEDGSGPDESVLPPPKDLPKC.

Residues 1–26 (MASAASSLPLLVSSLLLALFALGAHA) form the signal peptide. 2 Plastocyanin-like domains span residues 34-150 (DIVM…PAAG) and 160-312 (DEAE…YAGV). 4 N-linked (GlcNAc...) asparagine glycosylation sites follow: N39, N53, N72, and N80. Cu cation contacts are provided by H84 and H86. A glycan (N-linked (GlcNAc...) asparagine) is linked at N118. Residues H129 and H131 each coordinate Cu cation. Residues N189, N244, N300, N328, N376, N386, N421, and N445 are each glycosylated (N-linked (GlcNAc...) asparagine). The Plastocyanin-like 3 domain occupies 411-546 (DFPDRPPARF…KMAFLVEDGS (136 aa)). The Cu cation site is built by H463, H466, H468, H525, C526, H527, and H531.

Belongs to the multicopper oxidase family. Cu cation is required as a cofactor.

Its subcellular location is the secreted. The protein resides in the extracellular space. It localises to the apoplast. The catalysed reaction is 4 hydroquinone + O2 = 4 benzosemiquinone + 2 H2O. In terms of biological role, lignin degradation and detoxification of lignin-derived products. This is Laccase-2 (LAC2) from Oryza sativa subsp. japonica (Rice).